Reading from the N-terminus, the 270-residue chain is Tetraspanin-17 (270 aa).

Residues 1 to 19 (MPGKHQQFQDPEVGCCGKY) lie on the Cytoplasmic side of the membrane. The helical transmembrane segment at 20–40 (FLFGFNIVFWVLGALFLAIGL) threads the bilayer. At 41–63 (WAWGEKGVLSNISALTDLGGLDP) the chain is on the extracellular side. N-linked (GlcNAc...) asparagine glycosylation occurs at Asn-51. Residues 64–84 (VWLFVVVGGVMSVLGFAGCIG) traverse the membrane as a helical segment. The Cytoplasmic segment spans residues 85 to 94 (ALRENTFLLK). The helical transmembrane segment at 95–115 (FFSVFLGLIFFLELAAGILAF) threads the bilayer. Over 116–234 (VFKDWIRDQL…GQFEKWLQDN (119 aa)) the chain is Extracellular. Disulfide bonds link Cys-155–Cys-223, Cys-156–Cys-188, Cys-172–Cys-182, and Cys-189–Cys-202. An N-linked (GlcNAc...) asparagine glycan is attached at Asn-171. A helical membrane pass occupies residues 235-255 (LIVVAGVLVGIALLQIFGLCL). Residues 256–270 (AQNLVSDIKAVKANW) lie on the Cytoplasmic side of the membrane.

Belongs to the tetraspanin (TM4SF) family. As to quaternary structure, interacts with ADAM10; the interaction influences ADAM10 substrate specificity, endocytosis and turnover.

The protein localises to the cell membrane. Functionally, part of TspanC8 subgroup, composed of 6 members that interact with the transmembrane metalloprotease ADAM10. This interaction is required for ADAM10 exit from the endoplasmic reticulum and for enzymatic maturation and trafficking to the cell surface as well as substrate specificity. Different TspanC8/ADAM10 complexes have distinct substrates. Seems to regulate VE-cadherin expression in endothelial cells probably through interaction with ADAM10, promoting leukocyte transmigration. This is Tetraspanin-17 (Tspan17) from Mus musculus (Mouse).